We begin with the raw amino-acid sequence, 154 residues long: Small ribosomal subunit protein uS15 (154 aa).

Positions 1-10 are enriched in basic residues; sequence MARMHSRRRG. The tract at residues 1-32 is disordered; it reads MARMHSRRRGSSGSDRPTADEPPEWSEVDEDA. Over residues 21–32 the composition is skewed to acidic residues; that stretch reads EPPEWSEVDEDA.

It belongs to the universal ribosomal protein uS15 family. In terms of assembly, part of the 30S ribosomal subunit.

The protein is Small ribosomal subunit protein uS15 of Natronomonas pharaonis (strain ATCC 35678 / DSM 2160 / CIP 103997 / JCM 8858 / NBRC 14720 / NCIMB 2260 / Gabara) (Halobacterium pharaonis).